The sequence spans 473 residues: Glycine receptor subunit beta-type 4 (473 aa).

An N-terminal signal peptide occupies residues 1-19; sequence MHSLFLKILIYSLMQCVLG. Residues 20-249 lie on the Extracellular side of the membrane; the sequence is QAEFWDYDEN…EFHVDREITH (230 aa). Residues Asn-29, Asn-105, and Asn-151 are each glycosylated (N-linked (GlcNAc...) asparagine). A disulfide bond links Cys-166 and Cys-180. Residues 250-271 traverse the membrane as a helical segment; it reads HIIQSYIPTSLIVIISWFSFWL. Over 272–276 the chain is Cytoplasmic; sequence DVEAV. Residues 277–297 traverse the membrane as a helical segment; it reads PGRVSLSITTLLTLATQSSAA. At 298-308 the chain is on the extracellular side; the sequence is RMALPQASDVK. A helical transmembrane segment spans residues 309 to 329; the sequence is AIDVWMGTCMAFVFSAMIEFT. The Cytoplasmic portion of the chain corresponds to 330-439; it reads VVNYCVRRKV…NRKNAQKIDR (110 aa). A helical transmembrane segment spans residues 440–460; that stretch reads YSRALFPLAFIIFNIFYWIYY. The Extracellular segment spans residues 461–473; that stretch reads LKYAGSNSPELLL.

It belongs to the ligand-gated ion channel (TC 1.A.9) family. Glycine receptor (TC 1.A.9.3) subfamily. Pentamer.

Its subcellular location is the postsynaptic cell membrane. The protein localises to the synapse. The protein resides in the cell membrane. Functionally, glycine receptors are ligand-gated chloride channels. Channel opening is triggered by extracellular glycine. Contributes to the generation of inhibitory postsynaptic currents. The protein is Glycine receptor subunit beta-type 4 of Caenorhabditis elegans.